The chain runs to 662 residues: Glycogen debranching enzyme (662 aa).

Asp-338 functions as the Nucleophile in the catalytic mechanism. The Proton donor role is filled by Glu-373.

This sequence belongs to the glycosyl hydrolase 13 family.

The enzyme catalyses Hydrolysis of (1-&gt;6)-alpha-D-glucosidic linkages to branches with degrees of polymerization of three or four glucose residues in limit dextrin.. It participates in glycan degradation; glycogen degradation. In terms of biological role, removes maltotriose and maltotetraose chains that are attached by 1,6-alpha-linkage to the limit dextrin main chain, generating a debranched limit dextrin. The polypeptide is Glycogen debranching enzyme (Yersinia pseudotuberculosis serotype I (strain IP32953)).